The chain runs to 518 residues: Chromosomal replication initiator protein DnaA (518 aa).

The interval 1 to 72 (MTLAEFWPLC…VREELAAGRS (72 aa)) is domain I, interacts with DnaA modulators. Positions 72–180 (SAFVFKPGEG…DAEEARYEQT (109 aa)) are domain II. Positions 145-172 (EPRQAAGSASRPESVAVAKARTDVQRDA) are disordered. The tract at residues 181–397 (NLSPDYTFDT…GAFNRVGASS (217 aa)) is domain III, AAA+ region. ATP-binding residues include G225, G227, K228, and T229. The interval 398–518 (RFMNRPVIDI…YEKLLILIQN (121 aa)) is domain IV, binds dsDNA.

It belongs to the DnaA family. Oligomerizes as a right-handed, spiral filament on DNA at oriC.

It localises to the cytoplasm. Its function is as follows. Plays an essential role in the initiation and regulation of chromosomal replication. ATP-DnaA binds to the origin of replication (oriC) to initiate formation of the DNA replication initiation complex once per cell cycle. Binds the DnaA box (a 9 base pair repeat at the origin) and separates the double-stranded (ds)DNA. Forms a right-handed helical filament on oriC DNA; dsDNA binds to the exterior of the filament while single-stranded (ss)DNA is stabiized in the filament's interior. The ATP-DnaA-oriC complex binds and stabilizes one strand of the AT-rich DNA unwinding element (DUE), permitting loading of DNA polymerase. After initiation quickly degrades to an ADP-DnaA complex that is not apt for DNA replication. Binds acidic phospholipids. The chain is Chromosomal replication initiator protein DnaA from Neisseria meningitidis serogroup B (strain ATCC BAA-335 / MC58).